A 321-amino-acid polypeptide reads, in one-letter code: Beta-porphyranase B (321 aa).

A signal peptide spans 1 to 20 (MRKTVLYLSAASLFLSSYTL). A GH16 domain is found at 31–319 (EHIKNLPEAP…WVRAYKLVPI (289 aa)). 5 residues coordinate substrate: Trp72, Arg76, Glu173, Glu178, and Glu284. The active-site Nucleophile is the Glu173. Glu178 (proton donor) is an active-site residue.

The protein belongs to the glycosyl hydrolase 16 family.

The catalysed reaction is Hydrolysis of beta-D-galactopyranose-(1-&gt;4)-alpha-L-galactopyranose-6-sulfate linkages in porphyran.. Its function is as follows. Cleaves the sulfated polysaccharide porphyran at the (1-&gt;4) linkages between beta-D-galactopyranose and alpha-L-galactopyranose-6-sulfate, forming mostly the disaccharide alpha-L-galactopyranose-6-sulfate-(1-&gt;3)-beta-D-galactose. Some longer oligosaccharides of even number of residues are also observed. Inactive on the non-sulfated agarose portion of the porphyran backbone. This Phocaeicola plebeius (strain DSM 17135 / JCM 12973 / CCUG 54634 / M2) (Bacteroides plebeius) protein is Beta-porphyranase B.